Reading from the N-terminus, the 738-residue chain is Zinc finger protein 235 (738 aa).

The region spanning 8 to 79 (VTFKDVAVAF…ELQTQRGKHS (72 aa)) is the KRAB domain. The C2H2-type 1; degenerate zinc-finger motif lies at 263-285 (YQGNECEEAFNDSSSLELHKQVH). 15 consecutive C2H2-type zinc fingers follow at residues 319 to 341 (YWCH…QRVH), 347 to 369 (YTCH…LPIH), 375 to 397 (YRCD…CRVH), 403 to 425 (YKCE…ERIH), 431 to 453 (YKCG…QRVH), 459 to 481 (YKCD…QRVH), 487 to 509 (YKCE…QRVH), 515 to 537 (FRCN…QRVH), 543 to 565 (YKCE…QRVH), 571 to 593 (YKCE…QSVH), 599 to 621 (FKCD…QRVH), 627 to 649 (YKCD…QIIH), 655 to 677 (FKCE…QRVH), 683 to 705 (YTCQ…QRVH), and 711 to 733 (YICD…QRVH).

Belongs to the krueppel C2H2-type zinc-finger protein family.

Its subcellular location is the nucleus. In terms of biological role, may be involved in transcriptional regulation. The protein is Zinc finger protein 235 (ZNF235) of Homo sapiens (Human).